A 192-amino-acid chain; its full sequence is Crossover junction endodeoxyribonuclease RuvC (192 aa).

Active-site residues include D8, E67, and D139. D8, E67, and D139 together coordinate Mg(2+).

This sequence belongs to the RuvC family. In terms of assembly, homodimer which binds Holliday junction (HJ) DNA. The HJ becomes 2-fold symmetrical on binding to RuvC with unstacked arms; it has a different conformation from HJ DNA in complex with RuvA. In the full resolvosome a probable DNA-RuvA(4)-RuvB(12)-RuvC(2) complex forms which resolves the HJ. Mg(2+) serves as cofactor.

It localises to the cytoplasm. It catalyses the reaction Endonucleolytic cleavage at a junction such as a reciprocal single-stranded crossover between two homologous DNA duplexes (Holliday junction).. In terms of biological role, the RuvA-RuvB-RuvC complex processes Holliday junction (HJ) DNA during genetic recombination and DNA repair. Endonuclease that resolves HJ intermediates. Cleaves cruciform DNA by making single-stranded nicks across the HJ at symmetrical positions within the homologous arms, yielding a 5'-phosphate and a 3'-hydroxyl group; requires a central core of homology in the junction. The consensus cleavage sequence is 5'-(A/T)TT(C/G)-3'. Cleavage occurs on the 3'-side of the TT dinucleotide at the point of strand exchange. HJ branch migration catalyzed by RuvA-RuvB allows RuvC to scan DNA until it finds its consensus sequence, where it cleaves and resolves the cruciform DNA. In Haemophilus ducreyi (strain 35000HP / ATCC 700724), this protein is Crossover junction endodeoxyribonuclease RuvC.